We begin with the raw amino-acid sequence, 295 residues long: Bifunctional protein FolD (295 aa).

NADP(+) contacts are provided by residues 166–168, S191, and I232; that span reads GRS.

Belongs to the tetrahydrofolate dehydrogenase/cyclohydrolase family. In terms of assembly, homodimer.

The enzyme catalyses (6R)-5,10-methylene-5,6,7,8-tetrahydrofolate + NADP(+) = (6R)-5,10-methenyltetrahydrofolate + NADPH. It catalyses the reaction (6R)-5,10-methenyltetrahydrofolate + H2O = (6R)-10-formyltetrahydrofolate + H(+). It functions in the pathway one-carbon metabolism; tetrahydrofolate interconversion. Catalyzes the oxidation of 5,10-methylenetetrahydrofolate to 5,10-methenyltetrahydrofolate and then the hydrolysis of 5,10-methenyltetrahydrofolate to 10-formyltetrahydrofolate. The chain is Bifunctional protein FolD from Wolbachia pipientis subsp. Culex pipiens (strain wPip).